We begin with the raw amino-acid sequence, 181 residues long: ATP-dependent protease subunit HslV (181 aa).

T5 is a catalytic residue. Residues S162, C165, and T168 each contribute to the Na(+) site.

It belongs to the peptidase T1B family. HslV subfamily. A double ring-shaped homohexamer of HslV is capped on each side by a ring-shaped HslU homohexamer. The assembly of the HslU/HslV complex is dependent on binding of ATP.

The protein localises to the cytoplasm. It carries out the reaction ATP-dependent cleavage of peptide bonds with broad specificity.. With respect to regulation, allosterically activated by HslU binding. Its function is as follows. Protease subunit of a proteasome-like degradation complex believed to be a general protein degrading machinery. The protein is ATP-dependent protease subunit HslV of Campylobacter hominis (strain ATCC BAA-381 / DSM 21671 / CCUG 45161 / LMG 19568 / NCTC 13146 / CH001A).